The following is a 223-amino-acid chain: UPF0441 protein KPN78578_33850 (223 aa).

Positions serine 165–glycine 223 are disordered. Composition is skewed to low complexity over residues valine 177 to threonine 193 and arginine 209 to glycine 223.

The protein belongs to the UPF0441 family.

The sequence is that of UPF0441 protein KPN78578_33850 from Klebsiella pneumoniae subsp. pneumoniae (strain ATCC 700721 / MGH 78578).